Here is a 369-residue protein sequence, read N- to C-terminus: S-(hydroxymethyl)glutathione dehydrogenase (369 aa).

The Zn(2+) site is built by Cys-40, His-62, Cys-92, Cys-95, Cys-98, Cys-106, and Cys-169.

The protein belongs to the zinc-containing alcohol dehydrogenase family. Class-III subfamily. In terms of assembly, homodimer. The cofactor is Zn(2+).

It is found in the cytoplasm. It carries out the reaction S-(hydroxymethyl)glutathione + NADP(+) = S-formylglutathione + NADPH + H(+). It catalyses the reaction S-(hydroxymethyl)glutathione + NAD(+) = S-formylglutathione + NADH + H(+). The enzyme catalyses a primary alcohol + NAD(+) = an aldehyde + NADH + H(+). The catalysed reaction is a secondary alcohol + NAD(+) = a ketone + NADH + H(+). It carries out the reaction S-nitrosoglutathione + NADH + H(+) = S-(hydroxysulfenamide)glutathione + NAD(+). In terms of biological role, has high formaldehyde dehydrogenase activity in the presence of glutathione and catalyzes the oxidation of normal alcohols in a reaction that is not GSH-dependent. In addition, hemithiolacetals other than those formed from GSH, including omega-thiol fatty acids, also are substrates. Also acts as a S-nitroso-glutathione reductase by catalyzing the NADH-dependent reduction of S-nitrosoglutathione. This chain is S-(hydroxymethyl)glutathione dehydrogenase (frmA), found in Escherichia coli (strain SMS-3-5 / SECEC).